The following is a 114-amino-acid chain: UPF0342 protein SH1117 (114 aa).

Belongs to the UPF0342 family.

The protein is UPF0342 protein SH1117 of Staphylococcus haemolyticus (strain JCSC1435).